The following is a 125-amino-acid chain: Large ribosomal subunit protein bL17 (125 aa).

The protein belongs to the bacterial ribosomal protein bL17 family. As to quaternary structure, part of the 50S ribosomal subunit. Contacts protein L32.

The sequence is that of Large ribosomal subunit protein bL17 from Acinetobacter baylyi (strain ATCC 33305 / BD413 / ADP1).